The sequence spans 186 residues: ATP synthase subunit delta, cyanelle (186 aa).

This sequence belongs to the ATPase delta chain family. As to quaternary structure, F-type ATPases have 2 components, F(1) - the catalytic core - and F(0) - the membrane proton channel. F(1) has five subunits: alpha(3), beta(3), gamma(1), delta(1), epsilon(1). CF(0) has four main subunits: a(1), b(1), b'(1) and c(10-14). The alpha and beta chains form an alternating ring which encloses part of the gamma chain. F(1) is attached to F(0) by a central stalk formed by the gamma and epsilon chains, while a peripheral stalk is formed by the delta, b and b' chains.

The protein localises to the plastid. It localises to the cyanelle thylakoid membrane. Functionally, f(1)F(0) ATP synthase produces ATP from ADP in the presence of a proton or sodium gradient. F-type ATPases consist of two structural domains, F(1) containing the extramembraneous catalytic core and F(0) containing the membrane proton channel, linked together by a central stalk and a peripheral stalk. During catalysis, ATP synthesis in the catalytic domain of F(1) is coupled via a rotary mechanism of the central stalk subunits to proton translocation. This protein is part of the stalk that links CF(0) to CF(1). It either transmits conformational changes from CF(0) to CF(1) or is implicated in proton conduction. The polypeptide is ATP synthase subunit delta, cyanelle (Cyanophora paradoxa).